A 366-amino-acid polypeptide reads, in one-letter code: MIDLREDTWTLQLYAQRYKGLSPKNSRELQLRMEYDPLKPNLPTSGEEQNSKPEWLNTPPCLIPESESLDKAKGALVGLAIGDAIGTTLEFLPRDKLHVNDMVGGGPFRLQPGEWTDDTSMALCLAESYISAGRLDITLFREKLVRWYRHGENSSNGRCFDIGNTTRNALEQYLKHGASWFGNTEPETAGNAAIIRQAPTSIFRRKSLQRTFADSDSQSMATHCAPESMASCQFLGFILNYLINGSSREKAFSPHVMPLPVRVLLINAGEYKEKKRDEIRSSGYVIDTLEAAMWAVWNTDNFHDAILLAANLGDDADSVAATTGQIAGALYGYSNIPKPWLDKLVQQERISNLAEQLFYMAPEEDF.

Residues 1–65 (MIDLREDTWT…LNTPPCLIPE (65 aa)) are N-terminal extension. The ADP-ribosyl hydrolase domain stretch occupies residues 74–366 (GALVGLAIGD…LFYMAPEEDF (293 aa)). Mg(2+)-binding residues include T116, D117, D118, D161, and D317.

It belongs to the ADP-ribosylglycohydrolase family. In terms of assembly, forms a stable complex with cognate effector protein Tre1-Sp. The cofactor is Mg(2+).

It catalyses the reaction N(omega)-(ADP-D-ribosyl)-L-arginyl-[protein] + H2O = ADP-D-ribose + L-arginyl-[protein]. Immunity component of a contact-dependent interbacterial competition system (also called effector-immunity systems). Acts as an arginine mono-ADP-ribosylhydrolase, mediating the removal of mono-ADP-ribose attached to arginine residues on proteins. De-ADP-ribosylates FtsZ, is able to act on other proteins as well. Neutralizes the toxic activity of cognate toxin Tre1-Sp. Expression of this protein alone in E.coli partially protects the cells against competition by wild-type S.proteamaculans. Neutralizes Tre1-Sp both by occluding its active site via its N-terminal extension and by hydrolyzing the ADP-ribosyl moiety from FtsZ; the 2 activities are dissociable by mutagenesis. This Serratia proteamaculans (strain 568) protein is ADP-ribosylarginine hydrolase Tri1.